The sequence spans 452 residues: Adenylosuccinate synthetase (452 aa).

Residues 40 to 46 (GDEGKGK) and 68 to 70 (GHT) contribute to the GTP site. Residue Asp-41 is the Proton acceptor of the active site. The Mg(2+) site is built by Asp-41 and Gly-68. IMP is bound by residues 41–44 (DEGK), 66–69 (NAGH), Thr-158, Arg-172, Asn-250, Thr-265, and Arg-329. The active-site Proton donor is the His-69. 325–331 (VTTKRKR) is a substrate binding site. GTP-binding positions include Arg-331, 357 to 359 (KLD), and 440 to 442 (GVG).

This sequence belongs to the adenylosuccinate synthetase family. In terms of assembly, homodimer. The cofactor is Mg(2+).

The protein localises to the cytoplasm. The enzyme catalyses IMP + L-aspartate + GTP = N(6)-(1,2-dicarboxyethyl)-AMP + GDP + phosphate + 2 H(+). It functions in the pathway purine metabolism; AMP biosynthesis via de novo pathway; AMP from IMP: step 1/2. Its function is as follows. Plays an important role in the de novo pathway and in the salvage pathway of purine nucleotide biosynthesis. Catalyzes the first committed step in the biosynthesis of AMP from IMP. The polypeptide is Adenylosuccinate synthetase (Drosophila grimshawi (Hawaiian fruit fly)).